Reading from the N-terminus, the 165-residue chain is 2-C-methyl-D-erythritol 2,4-cyclodiphosphate synthase (165 aa).

A divalent metal cation contacts are provided by Asp-12 and His-14. 4-CDP-2-C-methyl-D-erythritol 2-phosphate contacts are provided by residues 12-14 (DIH) and 38-39 (HS). His-46 is a binding site for a divalent metal cation. Residues 60–62 (DIG), 136–139 (TTNE), and Arg-146 contribute to the 4-CDP-2-C-methyl-D-erythritol 2-phosphate site.

The protein belongs to the IspF family. Homotrimer. A divalent metal cation is required as a cofactor.

It catalyses the reaction 4-CDP-2-C-methyl-D-erythritol 2-phosphate = 2-C-methyl-D-erythritol 2,4-cyclic diphosphate + CMP. It functions in the pathway isoprenoid biosynthesis; isopentenyl diphosphate biosynthesis via DXP pathway; isopentenyl diphosphate from 1-deoxy-D-xylulose 5-phosphate: step 4/6. Involved in the biosynthesis of isopentenyl diphosphate (IPP) and dimethylallyl diphosphate (DMAPP), two major building blocks of isoprenoid compounds. Catalyzes the conversion of 4-diphosphocytidyl-2-C-methyl-D-erythritol 2-phosphate (CDP-ME2P) to 2-C-methyl-D-erythritol 2,4-cyclodiphosphate (ME-CPP) with a corresponding release of cytidine 5-monophosphate (CMP). In Nostoc sp. (strain PCC 7120 / SAG 25.82 / UTEX 2576), this protein is 2-C-methyl-D-erythritol 2,4-cyclodiphosphate synthase.